Reading from the N-terminus, the 199-residue chain is DNA repair RAD52-like protein 2, chloroplastic (199 aa).

The transit peptide at Met-1 to Cys-40 directs the protein to the chloroplast. Ser-41 is modified (N-acetylserine).

It belongs to the RAD52 family. As to expression, expressed in roots and shoots. Expressed at low levels in cauline leaves, flower buds, flowers and siliques.

The protein localises to the plastid. It localises to the chloroplast. Functionally, involved in double-stranded DNA break repair. This chain is DNA repair RAD52-like protein 2, chloroplastic, found in Arabidopsis thaliana (Mouse-ear cress).